A 298-amino-acid chain; its full sequence is MIIHPNFDPVAIHLGPLAVRWYGLMYLVGFIAAIVVGRIRLKLPYVAAQGWTAKDIDDMMFYGVLGTVLGGRLGYVLFYKADFYFSHPLDVFKVWEGGMSFHGGFLGVTLAMMLFAWQRKRHWLQVTDFVAPMVPLGLAAGRLGNFINGELWGRVTDPTAPWAMLFPGAMRDDAAWLPKHPELVEKWHLADVFMQYQMLPRHPSQLYEIALEGIALFFVLFLFARKPRPMGAISALFLIGYGLARFTVEFAREPDDFLGLLALGLSMGQWLSLPMILAGIAMMIWAYRRRAANANAAA.

7 consecutive transmembrane segments (helical) span residues 17 to 37 (LAVR…IVVG), 59 to 79 (MMFY…VLFY), 97 to 117 (GGMS…LFAW), 129 to 149 (FVAP…FING), 204 to 224 (SQLY…FLFA), 230 to 250 (MGAI…TVEF), and 257 to 277 (FLGL…PMIL). A 1,2-diacyl-sn-glycero-3-phospho-(1'-sn-glycerol) is bound at residue Arg-142.

The protein belongs to the Lgt family.

It is found in the cell inner membrane. It catalyses the reaction L-cysteinyl-[prolipoprotein] + a 1,2-diacyl-sn-glycero-3-phospho-(1'-sn-glycerol) = an S-1,2-diacyl-sn-glyceryl-L-cysteinyl-[prolipoprotein] + sn-glycerol 1-phosphate + H(+). It functions in the pathway protein modification; lipoprotein biosynthesis (diacylglyceryl transfer). Catalyzes the transfer of the diacylglyceryl group from phosphatidylglycerol to the sulfhydryl group of the N-terminal cysteine of a prolipoprotein, the first step in the formation of mature lipoproteins. The sequence is that of Phosphatidylglycerol--prolipoprotein diacylglyceryl transferase from Burkholderia orbicola (strain MC0-3).